A 415-amino-acid polypeptide reads, in one-letter code: F-box/kelch-repeat protein At2g29600 (415 aa).

Residues 1-58 are disordered; it reads MASISETSDDGSNGGDPNQKPEEPHKNPQEGKEEENQNEKPKEDDHQEEEVENVPQIP. The segment covering 19–45 has biased composition (basic and acidic residues); that stretch reads QKPEEPHKNPQEGKEEENQNEKPKEDD. The F-box domain occupies 56–103; the sequence is QIPPQMPLELIVSTIATLRRCHYPTLSLLSDSFRQVISSVDLFQTRSL. Kelch repeat units follow at residues 161-208, 210-254, 260-309, and 311-355; these read KIYV…VIDG, IYVV…FNVH, KIYI…AVVP, and HLHV…KLMI.

This Arabidopsis thaliana (Mouse-ear cress) protein is F-box/kelch-repeat protein At2g29600.